Here is a 225-residue protein sequence, read N- to C-terminus: Small ribosomal subunit protein eS1 (225 aa).

Belongs to the eukaryotic ribosomal protein eS1 family.

In Methanococcus maripaludis (strain C6 / ATCC BAA-1332), this protein is Small ribosomal subunit protein eS1.